A 469-amino-acid chain; its full sequence is UDP-N-acetylmuramate--L-alanine ligase (469 aa).

An ATP-binding site is contributed by Gly-118–Thr-124.

This sequence belongs to the MurCDEF family.

It localises to the cytoplasm. It carries out the reaction UDP-N-acetyl-alpha-D-muramate + L-alanine + ATP = UDP-N-acetyl-alpha-D-muramoyl-L-alanine + ADP + phosphate + H(+). It functions in the pathway cell wall biogenesis; peptidoglycan biosynthesis. In terms of biological role, cell wall formation. In Lachnoclostridium phytofermentans (strain ATCC 700394 / DSM 18823 / ISDg) (Clostridium phytofermentans), this protein is UDP-N-acetylmuramate--L-alanine ligase.